The sequence spans 90 residues: Acylphosphatase (90 aa).

Residues 3–90 (QKLFIVTGHV…EQFEHFEIRR (88 aa)) enclose the Acylphosphatase-like domain. Active-site residues include R18 and N36.

The protein belongs to the acylphosphatase family.

It carries out the reaction an acyl phosphate + H2O = a carboxylate + phosphate + H(+). This is Acylphosphatase (acyP) from Actinobacillus pleuropneumoniae serotype 5b (strain L20).